The following is a 109-amino-acid chain: C-X-C motif chemokine 13 (109 aa).

The N-terminal stretch at M1 to G21 is a signal peptide. 2 cysteine pairs are disulfide-bonded: C32–C59 and C34–C75.

Belongs to the intercrine alpha (chemokine CxC) family. In terms of tissue distribution, found in spleen (B-cell-rich zone or follicles), Peyer patches (strongest within germinal centers and extending to the mantle zone) and lymph nodes (in reticular pattern in follicles).

The protein localises to the secreted. Strongly chemotactic for B-lymphocytes, weakly for spleen monocytes and macrophages but no chemotactic activity for granulocytes. Binds to BLR1/CXCR5. May play a role in directing the migration of B-lymphocytes to follicles in secondary lymphoid organs. The chain is C-X-C motif chemokine 13 (Cxcl13) from Mus musculus (Mouse).